A 65-amino-acid chain; its full sequence is Large ribosomal subunit protein bL33c (65 aa).

The protein belongs to the bacterial ribosomal protein bL33 family.

It localises to the plastid. Its subcellular location is the chloroplast. This Marchantia polymorpha (Common liverwort) protein is Large ribosomal subunit protein bL33c (rpl33).